The sequence spans 136 residues: ATP synthase F(0) complex subunit C1, mitochondrial (136 aa).

Residues 1–61 (MQTTGALLIS…REFQTSVVSR (61 aa)) constitute a mitochondrion transit peptide. Residues 77–97 (VGVAGSGAGIGTVFGSLIIGY) form a helical membrane-spanning segment. Lysine 104 carries the N6,N6,N6-trimethyllysine modification. Residues 112 to 132 (ILGFALSEAMGLFCLMVAFLI) traverse the membrane as a helical segment.

It belongs to the ATPase C chain family. As to quaternary structure, homooctamer; the c-ring consists of eight c subunits forming a circle, and each subunit adopts a hairpin shape. Component of the ATP synthase complex composed at least of ATP5F1A/subunit alpha, ATP5F1B/subunit beta, ATP5MC1/subunit c (homooctomer), MT-ATP6/subunit a, MT-ATP8/subunit 8, ATP5ME/subunit e, ATP5MF/subunit f, ATP5MG/subunit g, ATP5MK/subunit k, ATP5MJ/subunit j, ATP5F1C/subunit gamma, ATP5F1D/subunit delta, ATP5F1E/subunit epsilon, ATP5PF/subunit F6, ATP5PB/subunit b, ATP5PD/subunit d, ATP5PO/subunit OSCP. ATP synthase complex consists of a soluble F(1) head domain (subunits alpha(3) and beta(3)) - the catalytic core - and a membrane F(0) domain - the membrane proton channel (subunits c, a, 8, e, f, g, k and j). These two domains are linked by a central stalk (subunits gamma, delta, and epsilon) rotating inside the F1 region and a stationary peripheral stalk (subunits F6, b, d, and OSCP). Interacts with TMEM70 (homooligomer form); this interaction facilitates the oligomer formation of subunit c/ATP5MC1 (c-ring) and the c-ring membrane insertion and also protects ATP5MC1 against intramitochondrial proteolysis. In terms of processing, trimethylated by ATPSCKMT at Lys-104. Methylation is required for proper incorporation of the C subunit into the ATP synthase complex and mitochondrial respiration.

The protein resides in the mitochondrion membrane. It catalyses the reaction H(+)(in) = H(+)(out). Functionally, subunit c, of the mitochondrial membrane ATP synthase complex (F(1)F(0) ATP synthase or Complex V) that produces ATP from ADP in the presence of a proton gradient across the membrane which is generated by electron transport complexes of the respiratory chain. ATP synthase complex consist of a soluble F(1) head domain - the catalytic core - and a membrane F(1) domain - the membrane proton channel. These two domains are linked by a central stalk rotating inside the F(1) region and a stationary peripheral stalk. During catalysis, ATP synthesis in the catalytic domain of F(1) is coupled via a rotary mechanism of the central stalk subunits to proton translocation. With the subunit a (MT-ATP6), forms the proton-conducting channel in the F(0) domain, that contains two crucial half-channels (inlet and outlet) that facilitate proton movement from the mitochondrial intermembrane space (IMS) into the matrix. Protons are taken up via the inlet half-channel and released through the outlet half-channel, following a Grotthuss mechanism. The protein is ATP synthase F(0) complex subunit C1, mitochondrial of Bos taurus (Bovine).